We begin with the raw amino-acid sequence, 180 residues long: Insulin-like growth factor 2 (180 aa).

The signal sequence occupies residues 1–24 (MGIPMGKSMLVLLTFLAFASCCIA). The tract at residues 25–52 (AYRPSETLCGGELVDTLQFVCGDRGFYF) is b. 3 disulfides stabilise this stretch: Cys-33-Cys-71, Cys-45-Cys-84, and Cys-70-Cys-75. The interval 53–64 (SRPASRVSRRSR) is c. An a region spans residues 65 to 85 (GIVEECCFRSCDLALLETYCA). Residues 86 to 91 (TPAKSE) form a d region. The propeptide at 92-180 (RDVSTPPTVL…APPEMASNRK (89 aa)) is e peptide. O-linked (GalNAc...) threonine glycans are attached at residues Thr-96, Thr-99, and Thr-163. Residues 161–180 (LPTQDPAHGGAPPEMASNRK) form a disordered region.

It belongs to the insulin family. As to quaternary structure, interacts with MYORG; this interaction is required for IGF2 secretion. Interacts with integrins ITGAV:ITGB3 and ITGA6:ITGB4; integrin-binding is required for IGF2 signaling. Interacts with IGFBP2. O-glycosylated with core 1 or possibly core 8 glycans. Thr-96 is a minor glycosylation site compared to Thr-99. Post-translationally, proteolytically processed by PCSK4, proIGF2 is cleaved at Arg-128 and Arg-92 to generate big-IGF2 and mature IGF2. As to expression, expressed in heart, placenta, lung, liver, muscle, kidney, tongue, limb, eye and pancreas.

The protein resides in the secreted. In terms of biological role, the insulin-like growth factors possess growth-promoting activity. Major fetal growth hormone in mammals. Plays a key role in regulating fetoplacental development. IGF2 is influenced by placental lactogen. Also involved in tissue differentiation. In adults, involved in glucose metabolism in adipose tissue, skeletal muscle and liver. Acts as a ligand for integrin which is required for IGF2 signaling. Positively regulates myogenic transcription factor MYOD1 function by facilitating the recruitment of transcriptional coactivators, thereby controlling muscle terminal differentiation. Inhibits myoblast differentiation and modulates metabolism via increasing the mitochondrial respiration rate. Preptin undergoes glucose-mediated co-secretion with insulin, and acts as a physiological amplifier of glucose-mediated insulin secretion. Exhibits osteogenic properties by increasing osteoblast mitogenic activity through phosphoactivation of MAPK1 and MAPK3. The sequence is that of Insulin-like growth factor 2 from Homo sapiens (Human).